The primary structure comprises 90 residues: UPF0367 protein P9301_01411 (90 aa).

It belongs to the UPF0367 family.

This chain is UPF0367 protein P9301_01411, found in Prochlorococcus marinus (strain MIT 9301).